We begin with the raw amino-acid sequence, 706 residues long: MGRKVTVATCALNQWALDFEGNLQRILKSIEIAKNRGARYRLGPELEICGYGCWDHYYESDTLLHSFQVLAALLESPVTQDIICDVGMPVMHRNVRYNCRVIFLSRKILLIRPKMALANEGNYRELRWFTPWSRSRHTEEYLLPRMIQDLTKQETAPFGDAVLATWDTCIGSEICEELWTPHSPHIDMGLDGVEIITNASGSHHVLRKANTRVDLVTMATSKNGGIYLLANQKGCDGDRLYYDGCAMIAMNGSVFAQGSQFSLDDVEVLTATLDLEDVRSYRAEISSRNLAASRASPYPRVKVDFALSCHEDLLAPVSEPIEWKYHSPEEEISLGPACWLWDFLRRSQQGGFLLPLSGGVDSAATACLVYSMCCQVCKSVRSGNQEVLADVRTIVNQISYTPQDPRDLCGHILTTCYMASKNSSQETCTRARELAQQIGSHHISLNIDPAVKAVTGIFSLVTGKSPLFAAHGGSSRENLALQNVQARIRMVLAYLFAQLSLWSRGIRGGLLVLGSANVDESLLGYLTKYDCSSADINPIGGISKTDLRAFVQFCIERFQLTALQSIISAPVTAELEPLADGQVSQTDEEDMGMTYAELSVYGKLRKVAKMGPYSMFCKLLGMWRHVCTPRQVADKVKWFFTKHSMNRHKMTTLTPAYHAENYSPEDNRFDLRPFLYNTSWPWQFRCIENQVLQLERAAPQSLDGVD.

The region spanning 5 to 275 (VTVATCALNQ…VEVLTATLDL (271 aa)) is the CN hydrolase domain. Residue Glu45 is the Proton acceptor; for glutaminase activity of the active site. Lys114 (for glutaminase activity) is an active-site residue. Cys175 functions as the Nucleophile; for glutaminase activity in the catalytic mechanism. A ligase region spans residues 325–706 (YHSPEEEISL…AAPQSLDGVD (382 aa)). Position 355–362 (355–362 (PLSGGVDS)) interacts with ATP. Residue Ser357 is part of the active site.

In the C-terminal section; belongs to the NAD synthetase family. Homohexamer.

It catalyses the reaction deamido-NAD(+) + L-glutamine + ATP + H2O = L-glutamate + AMP + diphosphate + NAD(+) + H(+). It participates in cofactor biosynthesis; NAD(+) biosynthesis; NAD(+) from deamido-NAD(+) (L-Gln route): step 1/1. Catalyzes the final step of the nicotinamide adenine dinucleotide (NAD) de novo synthesis pathway, the ATP-dependent amidation of deamido-NAD using L-glutamine as a nitrogen source. The polypeptide is Glutamine-dependent NAD(+) synthetase (NADSYN1) (Macaca fascicularis (Crab-eating macaque)).